Reading from the N-terminus, the 342-residue chain is Protein FDO1 (342 aa).

Disordered regions lie at residues 1 to 36 (MEEN…NGSD), 57 to 76 (MSPM…TLSV), and 299 to 322 (GRTI…GNRT). Residues 15 to 25 (ATWSNQMGSPE) are compositionally biased toward polar residues. Positions 308-319 (NTKDESIQDSHG) are enriched in basic and acidic residues.

Interacts with FKH1.

In concert with FKH1, plays a role in directionality of mating type switching by controlling which donor mating-type locus is inserted into MAT locus during mating type switching. This Saccharomyces cerevisiae (strain ATCC 204508 / S288c) (Baker's yeast) protein is Protein FDO1.